We begin with the raw amino-acid sequence, 159 residues long: Cathelicidin-5 (159 aa).

Residues M1–A29 form the signal peptide. The residue at position 30 (Q30) is a Pyrrolidone carboxylic acid. A propeptide spanning residues Q30–V131 is cleaved from the precursor. 2 disulfide bridges follow: C86–C97 and C108–C125.

Belongs to the cathelicidin family.

It is found in the secreted. Its function is as follows. Exerts a potent antimicrobial activity against Gram-negative and Gram-positive bacteria, including methicillin-resistant Staphylococcus aureus, and fungi. The chain is Cathelicidin-5 (CATHL5) from Bos taurus (Bovine).